The primary structure comprises 107 residues: uncharacterized protein (107 aa).

The protein resides in the mitochondrion. This is an uncharacterized protein from Arabidopsis thaliana (Mouse-ear cress).